Reading from the N-terminus, the 402-residue chain is MQEIEQRIYLAATYDTKGEEAEYLRQLLRRDGVMVVTVDVATSGQGSPAMVSAQEVAACYPQGAQAVFTGERGSAIVAMALAFERYLAGQRDVGAVLGIGGSGGTALVTPAMRALPVGVPKLMVSTMASGNVAPYVGPSDIAMMYSVTDVAGLNRISRRVLANAAGAIAGAFRQARQPIADDGRPAVGITMFGVTTPCVQHVTAALHDRYDCLVFHATGTGGQSMEKLADSGLLAGVLDLTTTEVCDFLFGGVLACTDDRFGAIARSGVPYVGSCGALDMVNFGALDTVPAACRERLLYPHNPQVTLMRTTAQENARQGAWIAERLNRCEGQVRFLIPEGGVSALDAPGQAFYDEAADAALFQALYDHVRQTDRRRLVRVPCHINDPLFARAAVEQFHEISQ.

Belongs to the UPF0261 family.

In Bordetella parapertussis (strain 12822 / ATCC BAA-587 / NCTC 13253), this protein is UPF0261 protein BPP1817.